Here is a 107-residue protein sequence, read N- to C-terminus: Potassium voltage-gated channel subfamily E member 3 (107 aa).

N-linked (GlcNAc...) asparagine glycosylation is found at asparagine 5, asparagine 22, and asparagine 45. Residues 31–54 (CRPGPGPGSGTGPDNQTEDHRASL) are disordered. A helical membrane pass occupies residues 61 to 81 (SYMYILFVMFLFAVTVGSLIL). The interval 72-83 (FAVTVGSLILGY) is interaction with KCNQ1. The Cytoplasmic segment spans residues 82–103 (GYTRSRKVDKRSDPYHVYIKNR).

The protein belongs to the potassium channel KCNE family. As to quaternary structure, interacts with KCNB1. Interacts with KCNC2. Associates with KCNC4/Kv3.4. Interacts with KCNQ1; associates with a KCNQ1:KCNE3 stoichiometry of 4:4; produces a current with nearly instantaneous activation with a linear current-voltage relationship and alters membrane raft localization; affects KCNQ1 structure and gating properties.

Its subcellular location is the cell membrane. It localises to the cytoplasm. The protein localises to the perikaryon. It is found in the cell projection. The protein resides in the dendrite. Its subcellular location is the membrane raft. Its function is as follows. Ancillary protein that functions as a regulatory subunit of the voltage-gated potassium (Kv) channel complex composed of pore-forming and potassium-conducting alpha subunits and of regulatory beta subunits. KCNE3 beta subunit modulates the gating kinetics and enhances stability of the channel complex. Alters the gating of the delayed rectifier Kv channel containing KCNB1 alpha subunit. Associates with KCNC4/Kv3.4 alpha subunit to form the subthreshold Kv channel in skeletal muscle and to establish the resting membrane potential (RMP) in muscle cells. Association with KCNQ1/KCLQT1 alpha subunit may form the intestinal cAMP-stimulated potassium channel involved in chloride secretion that produces a current with nearly instantaneous activation with a linear current-voltage relationship. This Rattus norvegicus (Rat) protein is Potassium voltage-gated channel subfamily E member 3.